We begin with the raw amino-acid sequence, 321 residues long: Ferredoxin--NADP reductase (321 aa).

Residues glutamate 33, glutamine 41, tyrosine 46, valine 86, leucine 119, aspartate 277, and serine 318 each contribute to the FAD site.

It belongs to the ferredoxin--NADP reductase type 2 family. In terms of assembly, homodimer. The cofactor is FAD.

It catalyses the reaction 2 reduced [2Fe-2S]-[ferredoxin] + NADP(+) + H(+) = 2 oxidized [2Fe-2S]-[ferredoxin] + NADPH. The protein is Ferredoxin--NADP reductase of Lactococcus lactis subsp. cremoris (strain SK11).